The following is a 41-amino-acid chain: Large ribosomal subunit protein bL36 (41 aa).

The protein belongs to the bacterial ribosomal protein bL36 family.

The protein is Large ribosomal subunit protein bL36 of Erythrobacter litoralis (strain HTCC2594).